A 59-amino-acid polypeptide reads, in one-letter code: Lantibiotic lacticin 3147 A1 (59 aa).

The propeptide occupies 1 to 29; sequence MNKNEIETQPVTWLEEVSDQNFDEDVFGA. A cross-link (lanthionine (Cys-Ser)) is located at residues 30 to 31; that stretch reads CS. Residues Thr-32 and Thr-34 each carry the 2,3-didehydrobutyrine modification. Ser-36 carries the post-translational modification 2,3-didehydroalanine (Ser). A cross-link (lanthionine (Ser-Cys)) is located at residues 38–48; the sequence is SDYWGNNGAWC. 2 cross-links (beta-methyllanthionine (Thr-Cys)) span residues 49–54 and 51–58; these read TLTHEC and THECMAWC.

In terms of processing, maturation of lantibiotics involves the enzymatic conversion of Thr, and Ser into dehydrated AA and the formation of thioether bonds with cysteine. This is followed by membrane translocation and cleavage of the modified precursor. It is not established whether the 2,3-didehydrobutyrines are the E- or Z-isomers. In the NMR model they were assumed to be the Z-isomer.

The protein localises to the secreted. Lanthionine-containing peptide antibiotic (lantibiotic) active on Gram-positive bacteria. The bactericidal activity of lantibiotics is based on depolarization of energized bacterial cytoplasmic membranes, initiated by the formation of aqueous transmembrane pores. When present individually lacticin 3147 A1 exhibits strong activity towards L.lactis strain AM2, weak activity towards L.lactis strain HP and no activity towards L.lactis strain IFPL359, but when combined with lacticin 3147 A2 it displays strong activity towards all three strains. The chain is Lantibiotic lacticin 3147 A1 from Lactococcus lactis subsp. lactis (Streptococcus lactis).